A 368-amino-acid polypeptide reads, in one-letter code: Phospho-N-acetylmuramoyl-pentapeptide-transferase (368 aa).

A run of 9 helical transmembrane segments spans residues 30 to 50, 72 to 92, 98 to 118, 139 to 159, 170 to 190, 201 to 221, 238 to 258, 262 to 284, and 345 to 365; these read AAAI…IRFL, VPTM…LLWA, HVWL…IDDY, VALG…SVLL, FSVD…TAVS, GLAA…AYLG, AGEI…FLWF, PAEV…VIAL, and KIVI…LMTL.

Belongs to the glycosyltransferase 4 family. MraY subfamily. Mg(2+) is required as a cofactor.

It is found in the cell inner membrane. It carries out the reaction UDP-N-acetyl-alpha-D-muramoyl-L-alanyl-gamma-D-glutamyl-meso-2,6-diaminopimeloyl-D-alanyl-D-alanine + di-trans,octa-cis-undecaprenyl phosphate = di-trans,octa-cis-undecaprenyl diphospho-N-acetyl-alpha-D-muramoyl-L-alanyl-D-glutamyl-meso-2,6-diaminopimeloyl-D-alanyl-D-alanine + UMP. It functions in the pathway cell wall biogenesis; peptidoglycan biosynthesis. Catalyzes the initial step of the lipid cycle reactions in the biosynthesis of the cell wall peptidoglycan: transfers peptidoglycan precursor phospho-MurNAc-pentapeptide from UDP-MurNAc-pentapeptide onto the lipid carrier undecaprenyl phosphate, yielding undecaprenyl-pyrophosphoryl-MurNAc-pentapeptide, known as lipid I. In Chlorobaculum parvum (strain DSM 263 / NCIMB 8327) (Chlorobium vibrioforme subsp. thiosulfatophilum), this protein is Phospho-N-acetylmuramoyl-pentapeptide-transferase.